Reading from the N-terminus, the 437-residue chain is Transcription factor TGAL5 (437 aa).

The segment at 33-75 is disordered; it reads QEPYSNSQSVGSTTDSSSAQNTMSQAELVSPASMRSDSGQEQQ. Residues 37-50 show a composition bias toward low complexity; the sequence is SNSQSVGSTTDSSS. Residues 51–75 are compositionally biased toward polar residues; the sequence is AQNTMSQAELVSPASMRSDSGQEQQ. The bZIP domain maps to 126–170; that stretch reads DAKTERRLAQNREAARKSRLRKKAYVQQLETSRIRLQQIEQELQR. Residues 128–148 form a basic motif region; the sequence is KTERRLAQNREAARKSRLRKK. A leucine-zipper region spans residues 154-168; sequence LETSRIRLQQIEQEL. The region spanning 191–405 is the DOG1 domain; that stretch reads AVMFDMDYTR…RALSSLWASR (215 aa).

Belongs to the bZIP family. Interacts with NPR5/NH4, NH5.1 and NH5.2.

Its subcellular location is the nucleus. Functionally, transcriptional regulator involved in defense response. This is Transcription factor TGAL5 from Oryza sativa subsp. japonica (Rice).